A 1261-amino-acid chain; its full sequence is SNF2 domain-containing protein CLASSY 2 (1261 aa).

The disordered stretch occupies residues 458 to 479; sequence FQKRTSRSSRSVAPKTEDSDEP. Positions 704 to 904 constitute a Helicase ATP-binding domain; it reads DPTSGNIGGC…FNTLCLARPK (201 aa). An ATP-binding site is contributed by 717-724; the sequence is HSPGAGKT. The DEAH box motif lies at 855-858; the sequence is DEGH. The Helicase C-terminal domain occupies 1067-1232; the sequence is FVLNLIFRVV…DPSLWQAEKI (166 aa).

Belongs to the helicase family. Interacts with NRPD1 and SHH1.

Its subcellular location is the nucleus. Probable chromatin remodeling factor. The protein is SNF2 domain-containing protein CLASSY 2 (CLSY2) of Arabidopsis thaliana (Mouse-ear cress).